A 380-amino-acid polypeptide reads, in one-letter code: 4-hydroxy-3-methylbut-2-en-1-yl diphosphate synthase (flavodoxin) (380 aa).

[4Fe-4S] cluster-binding residues include Cys-280, Cys-283, Cys-315, and Glu-322.

Belongs to the IspG family. It depends on [4Fe-4S] cluster as a cofactor.

The enzyme catalyses (2E)-4-hydroxy-3-methylbut-2-enyl diphosphate + oxidized [flavodoxin] + H2O + 2 H(+) = 2-C-methyl-D-erythritol 2,4-cyclic diphosphate + reduced [flavodoxin]. It participates in isoprenoid biosynthesis; isopentenyl diphosphate biosynthesis via DXP pathway; isopentenyl diphosphate from 1-deoxy-D-xylulose 5-phosphate: step 5/6. Functionally, converts 2C-methyl-D-erythritol 2,4-cyclodiphosphate (ME-2,4cPP) into 1-hydroxy-2-methyl-2-(E)-butenyl 4-diphosphate. The polypeptide is 4-hydroxy-3-methylbut-2-en-1-yl diphosphate synthase (flavodoxin) (Cutibacterium acnes (strain DSM 16379 / KPA171202) (Propionibacterium acnes)).